The following is a 212-amino-acid chain: Pyridoxine/pyridoxamine 5'-phosphate oxidase (212 aa).

Substrate-binding positions include Arg-8–Tyr-11 and Lys-66. Residues Arg-61 to Lys-66, Phe-76 to Thr-77, Arg-82, Lys-83, and Gln-105 contribute to the FMN site. Tyr-123, Arg-127, and Ser-131 together coordinate substrate. FMN is bound by residues Gln-140 to Ser-141 and Trp-185. Arg-191–His-193 contributes to the substrate binding site. Arg-195 provides a ligand contact to FMN.

This sequence belongs to the pyridoxamine 5'-phosphate oxidase family. In terms of assembly, homodimer. FMN serves as cofactor.

The enzyme catalyses pyridoxamine 5'-phosphate + O2 + H2O = pyridoxal 5'-phosphate + H2O2 + NH4(+). It catalyses the reaction pyridoxine 5'-phosphate + O2 = pyridoxal 5'-phosphate + H2O2. Its pathway is cofactor metabolism; pyridoxal 5'-phosphate salvage; pyridoxal 5'-phosphate from pyridoxamine 5'-phosphate: step 1/1. It functions in the pathway cofactor metabolism; pyridoxal 5'-phosphate salvage; pyridoxal 5'-phosphate from pyridoxine 5'-phosphate: step 1/1. In terms of biological role, catalyzes the oxidation of either pyridoxine 5'-phosphate (PNP) or pyridoxamine 5'-phosphate (PMP) into pyridoxal 5'-phosphate (PLP). The polypeptide is Pyridoxine/pyridoxamine 5'-phosphate oxidase (Shewanella amazonensis (strain ATCC BAA-1098 / SB2B)).